The chain runs to 1061 residues: E3 ubiquitin-protein ligase Smurf1 (1061 aa).

In terms of domain architecture, C2 spans M1–L116. Disordered regions lie at residues S143–R176 and H188–R496. The WW 1 domain occupies D167 to Q200. Polar residues-rich tracts occupy residues S207–D225 and T233–A255. Position 262 is a phosphoserine (S262). Positions E264–N273 are enriched in polar residues. Composition is skewed to low complexity over residues T274–G300 and P311–S322. Residues T348–V359 show a composition bias toward polar residues. Residues N360 to Q378 are compositionally biased toward low complexity. The segment covering P379 to A392 has biased composition (polar residues). Over residues T393–S409 the composition is skewed to low complexity. Residue T412 is modified to Phosphothreonine. S416 carries the phosphoserine modification. Residues P417–A439 show a composition bias toward polar residues. Residues R480–G494 show a composition bias toward gly residues. 2 consecutive WW domains span residues L513–I546 and G561–L594. Residues L513–I602 are interaction with MAD. 2 stretches are compositionally biased toward low complexity: residues P608 to T617 and T624 to P656. The interval P608–P661 is disordered. The HECT domain maps to R723–E1061. Catalysis depends on C1029, which acts as the Glycyl thioester intermediate.

Interacts with phosphorylated MAD.

It catalyses the reaction S-ubiquitinyl-[E2 ubiquitin-conjugating enzyme]-L-cysteine + [acceptor protein]-L-lysine = [E2 ubiquitin-conjugating enzyme]-L-cysteine + N(6)-ubiquitinyl-[acceptor protein]-L-lysine.. It participates in protein modification; protein ubiquitination. E3 ubiquitin-protein ligase which accepts ubiquitin from an E2 ubiquitin-conjugating enzyme in the form of a thioester and then directly transfers the ubiquitin to targeted substrates. Down-regulates Dpp signaling after gastrulation by promoting MAD ubiquitination and subsequent degradation. This Drosophila melanogaster (Fruit fly) protein is E3 ubiquitin-protein ligase Smurf1.